The sequence spans 228 residues: uncharacterized protein (228 aa).

The protein to E.coli YbfG.

This is an uncharacterized protein from Haemophilus influenzae (strain ATCC 51907 / DSM 11121 / KW20 / Rd).